The chain runs to 169 residues: Protein-export protein SecB (169 aa).

The protein belongs to the SecB family. In terms of assembly, homotetramer, a dimer of dimers. One homotetramer interacts with 1 SecA dimer.

The protein localises to the cytoplasm. One of the proteins required for the normal export of preproteins out of the cell cytoplasm. It is a molecular chaperone that binds to a subset of precursor proteins, maintaining them in a translocation-competent state. It also specifically binds to its receptor SecA. The polypeptide is Protein-export protein SecB (Haemophilus influenzae (strain PittEE)).